A 219-amino-acid chain; its full sequence is MOB kinase activator-like 1 (219 aa).

Zn(2+) is bound by residues cysteine 79, cysteine 84, histidine 161, and histidine 166.

It belongs to the MOB1/phocein family. In terms of assembly, interacts with and activates trc and wts. In terms of processing, phosphorylated by wts/mats kinase complex. Activated by phosphorylation by Hippo (Hpo) kinase which increases its affinity and its ability to activate Warts (Wts) kinase. As to expression, ubiquitously expressed at low levels in developing tissues (at protein level).

The protein localises to the cytoplasm. Its subcellular location is the cytoskeleton. It is found in the microtubule organizing center. The protein resides in the centrosome. It localises to the nucleus. The protein localises to the cytosol. Its subcellular location is the cell membrane. In terms of biological role, coactivator of Warts (Wts) kinase in the Hippo/SWH (Sav/Wts/Hpo)signaling pathway, a signaling pathway that plays a pivotal role in organ size control and tumor suppression by restricting proliferation and promoting apoptosis. The core of this pathway is composed of a kinase cascade wherein Hippo (Hpo), in complex with its regulatory protein Salvador (Sav), phosphorylates and activates Warts (Wts) in complex with its regulatory protein Mats, which in turn phosphorylates and inactivates the Yorkie (Yki)oncoprotein. The Hippo/SWH signaling pathway inhibits the activity of the transcriptional complex formed by Scalloped (sd) and Yki and the target genes of this pathway include cyclin-E (cycE), diap1 and bantam. Mats is essential for early development and is required for proper chromosomal segregation in developing embryos. This Drosophila melanogaster (Fruit fly) protein is MOB kinase activator-like 1.